Reading from the N-terminus, the 76-residue chain is Endothelin-1 (76 aa).

The tract at residues 30–44 (CQCASQKDKKCWNFC) is endothelin-like.

It belongs to the endothelin/sarafotoxin family.

The protein localises to the secreted. In terms of biological role, endothelins are endothelium-derived vasoconstrictor peptides. Probable ligand for G-protein coupled receptors EDNRA and EDNRB which activates PTK2B, BCAR1, BCAR3 and, GTPases RAP1 and RHOA cascade in glomerular mesangial cells. Also binds the DEAR/FBXW7-AS1 receptor. Promotes mesenteric arterial wall remodeling via activation of ROCK signaling and subsequent colocalization of NFATC3 with F-actin filaments. NFATC3 then translocates to the nucleus where it subsequently promotes the transcription of the smooth muscle hypertrophy and differentiation marker ACTA2. This chain is Endothelin-1 (EDN1), found in Macaca fascicularis (Crab-eating macaque).